Consider the following 854-residue polypeptide: MSSGANITYASRKRRKPVQKTVKPIPAEGIKSNPSKRHRDRLNTELDRLASLLPFPQDVINKLDKLSVLRLSVSYLRAKSFFDVALKSTPADRNGGQDQCRAQIRDWQDLQEGEFLLQALNGFVLVVTADALVFYASSTIQDYLGFQQSDVIHQSVYELIHTEDRAEFQRQLHWALNPSQCTDSAQGVDEAHGPPQAAVYYTPDQLPPENASFMERCFRCRLRCLLDNSSGFLAMNFQGRLKYLHGQNKKGKDGALLPPQLALFAIATPLQPPSILEIRTKNFIFRTKHKLDFTPIGCDAKGQLILGYTEVELCTRGSGYQFIHAADMLHCAESHIRMIKTGESGMTVFRLLAKHSRWRWVQSNARLIYRNGRPDYIIATQRPLTDEEGREHLQKRSMSLPFMFATGEAVLYEISSPFSPIMDPLPIRTKSNTSRKDWAPQSTPSKDSFHPSSLMSALIQQDESIYLCPPSSPAPLDSHFLMGSVSKCGSWQDSFAATGSEAALKHEQIGHAQDVNLALSGGPSELFPDNKNNDLYSIMRNLGIDFEDIRSMQNEEFFRTDSTAAAAGEVDFKDIDITDEILTYVQDSLNNSTLLNSACQQQPVTQHLSCMLQERLQLEQQQQLQQPPPQALEPQQQLCQMVCPQQDLGPKHTQINGTFASWNPTPPVSFNCPQQELKHYQLFSSLQGTAQEFPYKPEVDSVPYTQNFAPCNQPLLPEHSKSVQLDFPGRDFEPSLHPTTSNLDFVSCLQVPENQSHGINSQSAMVSPQAYYAGAMSMYQCQPGPQRTPVDQTQYSSEIPGSQAFLSKVQSRGVFNETYSSDLSSIGHAAQTTGHLHHLAEAQPLPDITPGGFL.

The propeptide occupies 1-9 (MSSGANITY). The tract at residues 1 to 38 (MSSGANITYASRKRRKPVQKTVKPIPAEGIKSNPSKRH) is disordered. 2 short sequence motifs (nuclear localization signal) span residues 12–15 (RKRR) and 36–41 (KRHRDR). One can recognise a bHLH domain in the interval 26–79 (PAEGIKSNPSKRHRDRLNTELDRLASLLPFPQDVINKLDKLSVLRLSVSYLRAK). The tract at residues 37–65 (RHRDRLNTELDRLASLLPFPQDVINKLDK) is DNA-binding. Required for maintaining the overall integrity of the AHR:ARNT heterodimer and its transcriptional activity regions lie at residues 49-81 (LASLLPFPQDVINKLDKLSVLRLSVSYLRAKSF), 116-124 (LLQALNGFV), and 264-266 (FAI). A Nuclear export signal motif is present at residues 63 to 71 (LDKLSVLRL). Residues 111–175 (QEGEFLLQAL…AEFQRQLHWA (65 aa)) form the PAS 1 domain. In terms of domain architecture, PAS 2 spans 270–340 (LQPPSILEIR…CAESHIRMIK (71 aa)). The 42-residue stretch at 346-387 (MTVFRLLAKHSRWRWVQSNARLIYRNGRPDYIIATQRPLTDE) folds into the PAC domain. A disordered region spans residues 425-451 (LPIRTKSNTSRKDWAPQSTPSKDSFHP). The segment covering 440–451 (PQSTPSKDSFHP) has biased composition (polar residues).

As to quaternary structure, homodimer. Heterodimer; efficient DNA binding requires dimerization with another bHLH protein. Interacts with ARNT; the heterodimer ARNT:AHR binds to core DNA sequence 5'-TGCGTG-3' within the dioxin response element (DRE) of target gene promoters and activates their transcription. Binds MYBBP1A. Interacts with coactivators including SRC-1, RIP140 and NOCA7, and with the corepressor SMRT. Interacts with NEDD8 and IVNS1ABP. Interacts with BMAL1. Interacts with HSP90AB1. Interacts with TIPARP; leading to mono-ADP-ribosylation of AHR and subsequent inhibition of AHR. Mono-ADP-ribosylated, leading to inhibit transcription activator activity of AHR.

The protein resides in the cytoplasm. The protein localises to the nucleus. Functionally, ligand-activated transcription factor that enables cells to adapt to changing conditions by sensing compounds from the environment, diet, microbiome and cellular metabolism, and which plays important roles in development, immunity and cancer. Upon ligand binding, translocates into the nucleus, where it heterodimerizes with ARNT and induces transcription by binding to xenobiotic response elements (XRE). Regulates a variety of biological processes, including angiogenesis, hematopoiesis, drug and lipid metabolism, cell motility and immune modulation. Xenobiotics can act as ligands: upon xenobiotic-binding, activates the expression of multiple phase I and II xenobiotic chemical metabolizing enzyme genes (such as the CYP1A1 gene). Mediates biochemical and toxic effects of halogenated aromatic hydrocarbons. Next to xenobiotics, natural ligands derived from plants, microbiota, and endogenous metabolism are potent AHR agonists. Tryptophan (Trp) derivatives constitute an important class of endogenous AHR ligands. Acts as a negative regulator of anti-tumor immunity: indoles and kynurenic acid generated by Trp catabolism act as ligand and activate AHR, thereby promoting AHR-driven cancer cell motility and suppressing adaptive immunity. Regulates the circadian clock by inhibiting the basal and circadian expression of the core circadian component PER1. Inhibits PER1 by repressing the CLOCK-BMAL1 heterodimer mediated transcriptional activation of PER1. The heterodimer ARNT:AHR binds to core DNA sequence 5'-TGCGTG-3' within the dioxin response element (DRE) of target gene promoters and activates their transcription. The chain is Aryl hydrocarbon receptor (Ahr) from Mus spicilegus (Steppe mouse).